A 697-amino-acid polypeptide reads, in one-letter code: Potassium-transporting ATPase ATP-binding subunit (697 aa).

Transmembrane regions (helical) follow at residues 55 to 75 (PIMF…FLPS), 79 to 99 (SIPG…VLFA), 245 to 265 (LTLI…YLGF), and 271 to 291 (VLVA…LSAI). Catalysis depends on D324, which acts as the 4-aspartylphosphate intermediate. Residues D361, E365, 393 to 400 (FKAETRMS), and K412 each bind ATP. D535 and D539 together coordinate Mg(2+). 3 helical membrane passes run 605–625 (FAII…LNIM), 633–653 (AILS…PLAM), and 677–697 (GGVI…GLFI).

It belongs to the cation transport ATPase (P-type) (TC 3.A.3) family. Type IA subfamily. The system is composed of three essential subunits: KdpA, KdpB and KdpC.

Its subcellular location is the cell membrane. The enzyme catalyses K(+)(out) + ATP + H2O = K(+)(in) + ADP + phosphate + H(+). Functionally, part of the high-affinity ATP-driven potassium transport (or Kdp) system, which catalyzes the hydrolysis of ATP coupled with the electrogenic transport of potassium into the cytoplasm. This subunit is responsible for energy coupling to the transport system and for the release of the potassium ions to the cytoplasm. This Bacillus cereus (strain ZK / E33L) protein is Potassium-transporting ATPase ATP-binding subunit.